The sequence spans 46 residues: MTAQGNKPSSHDVITGRWTPSAADRAAGRVSGFGVITNIINGGLDC.

This sequence belongs to the glycosyl hydrolase 19 family. Chitinase class I subfamily.

The enzyme catalyses Random endo-hydrolysis of N-acetyl-beta-D-glucosaminide (1-&gt;4)-beta-linkages in chitin and chitodextrins.. Functionally, defense against chitin-containing fungal and bacterial pathogens. The chain is Endochitinase 1A from Arachis hypogaea (Peanut).